Consider the following 350-residue polypeptide: Homeobox-leucine zipper protein HOX5 (350 aa).

Positions A83 to Q142 form a DNA-binding region, homeobox. The segment at K141 to K185 is leucine-zipper. Positions E180–A254 are disordered. Positions S188–A198 are enriched in low complexity.

This sequence belongs to the HD-ZIP homeobox family. Class I subfamily. In terms of assembly, homodimer. May form a heterodimer with HOX4. As to expression, expressed in seedlings, roots, leaves, nodes, internodes, flowers and embryo.

Its subcellular location is the nucleus. Functionally, probable transcription activator that binds to the DNA sequence 5'-CAAT[AT]ATTG-3'. The chain is Homeobox-leucine zipper protein HOX5 (HOX5) from Oryza sativa subsp. indica (Rice).